Reading from the N-terminus, the 71-residue chain is Prokaryotic ubiquitin-like protein Pup (71 aa).

Positions 1-30 are disordered; the sequence is MPSASGHHQIPAETQRHDDDQTQETAQGLS. Residues 23 to 56 are a coiled coil; sequence QETAQGLSAAAMLAQEQADDLDAILDDIETVLET. Positions 27-65 are ARC ATPase binding; that stretch reads QGLSAAAMLAQEQADDLDAILDDIETVLETNAEEYVSSF. An Isoglutamyl lysine isopeptide (Glu-Lys) (interchain with K-? in acceptor proteins) cross-link involves residue Glu-71.

This sequence belongs to the prokaryotic ubiquitin-like protein family. In terms of assembly, strongly interacts with the proteasome-associated ATPase ARC through a hydrophobic interface; the interacting region of Pup lies in its C-terminal half. There is one Pup binding site per ARC hexamer ring.

It participates in protein degradation; proteasomal Pup-dependent pathway. In terms of biological role, protein modifier that is covalently attached to lysine residues of substrate proteins, thereby targeting them for proteasomal degradation. The tagging system is termed pupylation. In Bifidobacterium animalis subsp. lactis (strain AD011), this protein is Prokaryotic ubiquitin-like protein Pup.